The sequence spans 368 residues: NAD(P)H-quinone oxidoreductase subunit 1, chloroplastic (368 aa).

9 helical membrane passes run 11-31 (RVIN…LIWI), 33-53 (IYIL…VWLE), 98-118 (WLFS…YLVI), 131-151 (IGVF…LMAG), 177-197 (LALC…VDIV), 205-225 (FWGW…ISSL), 255-275 (FGLF…FVTI), 305-325 (VLGI…FLFI), and 348-368 (FLLP…LLLL).

Belongs to the complex I subunit 1 family. In terms of assembly, NDH is composed of at least 16 different subunits, 5 of which are encoded in the nucleus.

Its subcellular location is the plastid. The protein resides in the chloroplast thylakoid membrane. The enzyme catalyses a plastoquinone + NADH + (n+1) H(+)(in) = a plastoquinol + NAD(+) + n H(+)(out). It catalyses the reaction a plastoquinone + NADPH + (n+1) H(+)(in) = a plastoquinol + NADP(+) + n H(+)(out). In terms of biological role, NDH shuttles electrons from NAD(P)H:plastoquinone, via FMN and iron-sulfur (Fe-S) centers, to quinones in the photosynthetic chain and possibly in a chloroplast respiratory chain. The immediate electron acceptor for the enzyme in this species is believed to be plastoquinone. Couples the redox reaction to proton translocation, and thus conserves the redox energy in a proton gradient. This Cycas taitungensis (Prince sago) protein is NAD(P)H-quinone oxidoreductase subunit 1, chloroplastic.